Reading from the N-terminus, the 282-residue chain is Phosphatidylserine decarboxylase proenzyme (282 aa).

Catalysis depends on charge relay system; for autoendoproteolytic cleavage activity residues D88, H144, and S247. Catalysis depends on S247, which acts as the Schiff-base intermediate with substrate; via pyruvic acid; for decarboxylase activity. S247 bears the Pyruvic acid (Ser); by autocatalysis mark.

This sequence belongs to the phosphatidylserine decarboxylase family. PSD-B subfamily. Prokaryotic type I sub-subfamily. Heterodimer of a large membrane-associated beta subunit and a small pyruvoyl-containing alpha subunit. Requires pyruvate as cofactor. In terms of processing, is synthesized initially as an inactive proenzyme. Formation of the active enzyme involves a self-maturation process in which the active site pyruvoyl group is generated from an internal serine residue via an autocatalytic post-translational modification. Two non-identical subunits are generated from the proenzyme in this reaction, and the pyruvate is formed at the N-terminus of the alpha chain, which is derived from the carboxyl end of the proenzyme. The autoendoproteolytic cleavage occurs by a canonical serine protease mechanism, in which the side chain hydroxyl group of the serine supplies its oxygen atom to form the C-terminus of the beta chain, while the remainder of the serine residue undergoes an oxidative deamination to produce ammonia and the pyruvoyl prosthetic group on the alpha chain. During this reaction, the Ser that is part of the protease active site of the proenzyme becomes the pyruvoyl prosthetic group, which constitutes an essential element of the active site of the mature decarboxylase.

It localises to the cell membrane. The catalysed reaction is a 1,2-diacyl-sn-glycero-3-phospho-L-serine + H(+) = a 1,2-diacyl-sn-glycero-3-phosphoethanolamine + CO2. The protein operates within phospholipid metabolism; phosphatidylethanolamine biosynthesis; phosphatidylethanolamine from CDP-diacylglycerol: step 2/2. Its function is as follows. Catalyzes the formation of phosphatidylethanolamine (PtdEtn) from phosphatidylserine (PtdSer). This Xanthomonas oryzae pv. oryzae (strain MAFF 311018) protein is Phosphatidylserine decarboxylase proenzyme.